A 507-amino-acid polypeptide reads, in one-letter code: ATP synthase subunit alpha, chloroplastic (507 aa).

170–177 provides a ligand contact to ATP; it reads GDRQTGKT.

Belongs to the ATPase alpha/beta chains family. As to quaternary structure, F-type ATPases have 2 components, CF(1) - the catalytic core - and CF(0) - the membrane proton channel. CF(1) has five subunits: alpha(3), beta(3), gamma(1), delta(1), epsilon(1). CF(0) has four main subunits: a, b, b' and c.

Its subcellular location is the plastid. It localises to the chloroplast thylakoid membrane. The enzyme catalyses ATP + H2O + 4 H(+)(in) = ADP + phosphate + 5 H(+)(out). Produces ATP from ADP in the presence of a proton gradient across the membrane. The alpha chain is a regulatory subunit. This chain is ATP synthase subunit alpha, chloroplastic, found in Oenothera glazioviana (Large-flowered evening primrose).